Reading from the N-terminus, the 352-residue chain is Biotin synthase (352 aa).

Residues 41 to 268 (NEVQVSTLLS…ASHVRLSAGR (228 aa)) enclose the Radical SAM core domain. Residues cysteine 56, cysteine 60, and cysteine 63 each coordinate [4Fe-4S] cluster. [2Fe-2S] cluster is bound by residues cysteine 100, cysteine 131, cysteine 191, and arginine 263.

It belongs to the radical SAM superfamily. Biotin synthase family. In terms of assembly, homodimer. The cofactor is [4Fe-4S] cluster. Requires [2Fe-2S] cluster as cofactor.

It catalyses the reaction (4R,5S)-dethiobiotin + (sulfur carrier)-SH + 2 reduced [2Fe-2S]-[ferredoxin] + 2 S-adenosyl-L-methionine = (sulfur carrier)-H + biotin + 2 5'-deoxyadenosine + 2 L-methionine + 2 oxidized [2Fe-2S]-[ferredoxin]. The protein operates within cofactor biosynthesis; biotin biosynthesis; biotin from 7,8-diaminononanoate: step 2/2. Functionally, catalyzes the conversion of dethiobiotin (DTB) to biotin by the insertion of a sulfur atom into dethiobiotin via a radical-based mechanism. This is Biotin synthase from Marinobacter nauticus (strain ATCC 700491 / DSM 11845 / VT8) (Marinobacter aquaeolei).